The following is a 277-amino-acid chain: Probable CCR4-associated factor 1 homolog 10 (277 aa).

Positions 40, 42, 166, and 235 each coordinate a divalent metal cation.

The protein belongs to the CAF1 family. As to quaternary structure, component of the CCR4-NOT complex, at least composed of CRR4 and CAF1 proteins. A divalent metal cation serves as cofactor.

It is found in the nucleus. It localises to the cytoplasm. It carries out the reaction Exonucleolytic cleavage of poly(A) to 5'-AMP.. Ubiquitous transcription factor required for a diverse set of processes. It is a component of the CCR4 complex involved in the control of gene expression. The polypeptide is Probable CCR4-associated factor 1 homolog 10 (CAF1-10) (Arabidopsis thaliana (Mouse-ear cress)).